We begin with the raw amino-acid sequence, 705 residues long: MPTNLFFNAHHSPVGAFASFTLGFPGKSGGLDLELARPPRQNVLIGVESLHESGLYHVLPFLETAEEDESKRYDIENPDPNPQKPNILIPFAKEEIQREFHVATDTWKAGDLTFTIYSPVKAVPNPETADEEELKLALVPAVIVEMTIDNTNGTRARRAFFGFEGTDPYTSMRRIDDTCPQLRGVGQGRILSIVSKDEGVRSALHFSMEDILTAQLEENWTFGLGKVGALIVDVPAGEKKTYQFAVCFYRGGYVTAGMDASYFYTRFFQNIEEVGLYALEQAEVLKEQSFRSNKLIEKEWLSDDQTFMMAHAIRSYYGNTQLLEHEGKPIWVVNEGEYRMMNTFDLTVDQLFFELKLNPWTVKNVLDLYVERYSYEDRVRFPGEETEYPSGISFTHDMGVANTFSRPHYSSYELYGISGCFSHMTHEQLVNWVLCAAVYIEQTKDWAWRDKRLAILEQCLESMVRRDHPDPEQRNGVMGLDSTRTMGGAEITTYDSLDVSLGQARNNLYLAGKCWAAYVALEKLFRDVGKEELAALAGEQAEKCAATIVSHVTDDGYIPAIMGEGNDSKIIPAIEGLVFPYFTNCHEALDENGRFGAYIQALRNHLQYVLREGICLFPDGGWKISSTSNNSWLSKIYLCQFIARHILGWEWDEQGKRADAAHVAWLTHPTLSIWSWSDQIIAGEITGSKYYPRGVTSILWLEEGE.

Belongs to the glycosyl hydrolase 52 family.

It catalyses the reaction Hydrolysis of (1-&gt;4)-beta-D-xylans, to remove successive D-xylose residues from the non-reducing termini.. It participates in glycan degradation; xylan degradation. In Geobacillus stearothermophilus (Bacillus stearothermophilus), this protein is Beta-xylosidase (xylA).